Reading from the N-terminus, the 431-residue chain is Adenylosuccinate synthetase (431 aa).

GTP is bound by residues G12–K18 and G40–T42. D13 (proton acceptor) is an active-site residue. Residues D13 and G40 each coordinate Mg(2+). Residues D13 to K16, N38 to H41, T131, R145, Q225, T240, and R304 each bind IMP. The active-site Proton donor is the H41. Substrate is bound at residue T300 to R306. Residues R306, K332 to D334, and S414 to S416 each bind GTP.

Belongs to the adenylosuccinate synthetase family. Homodimer. The cofactor is Mg(2+).

Its subcellular location is the cytoplasm. It carries out the reaction IMP + L-aspartate + GTP = N(6)-(1,2-dicarboxyethyl)-AMP + GDP + phosphate + 2 H(+). It participates in purine metabolism; AMP biosynthesis via de novo pathway; AMP from IMP: step 1/2. Its function is as follows. Plays an important role in the de novo pathway of purine nucleotide biosynthesis. Catalyzes the first committed step in the biosynthesis of AMP from IMP. The polypeptide is Adenylosuccinate synthetase (Jannaschia sp. (strain CCS1)).